A 215-amino-acid polypeptide reads, in one-letter code: MSEAKRLAAEKAIDYVEDGMIVGVGTGSTVAYFIDALGRIGHRIKGAVSSSEQSTARLRQHGVEVLDLNHTGNLSLYVDGADECDPNRCLIKGGGAALTREKIIAEASERFICIVDPSKQVPVLGKFPLPVEVIPMARSLVARQILALTGGQPVWRDGVVTDNGNVVLDVHHLQITDPVGLERSLNQIPGVVCVGLFARRPADVVIVGGEPPQVI.

Residues 26 to 29, 79 to 82, and 92 to 95 contribute to the substrate site; these read TGST, DGAD, and KGGG. Residue E101 is the Proton acceptor of the active site. Residue K119 coordinates substrate.

It belongs to the ribose 5-phosphate isomerase family. In terms of assembly, homodimer.

It catalyses the reaction aldehydo-D-ribose 5-phosphate = D-ribulose 5-phosphate. Its pathway is carbohydrate degradation; pentose phosphate pathway; D-ribose 5-phosphate from D-ribulose 5-phosphate (non-oxidative stage): step 1/1. Its function is as follows. Catalyzes the reversible conversion of ribose-5-phosphate to ribulose 5-phosphate. This Xanthomonas euvesicatoria pv. vesicatoria (strain 85-10) (Xanthomonas campestris pv. vesicatoria) protein is Ribose-5-phosphate isomerase A.